The sequence spans 174 residues: ATP-dependent protease subunit HslV (174 aa).

Threonine 2 is an active-site residue. Positions 157, 160, and 163 each coordinate Na(+).

This sequence belongs to the peptidase T1B family. HslV subfamily. A double ring-shaped homohexamer of HslV is capped on each side by a ring-shaped HslU homohexamer. The assembly of the HslU/HslV complex is dependent on binding of ATP.

It is found in the cytoplasm. It catalyses the reaction ATP-dependent cleavage of peptide bonds with broad specificity.. Its activity is regulated as follows. Allosterically activated by HslU binding. In terms of biological role, protease subunit of a proteasome-like degradation complex believed to be a general protein degrading machinery. The sequence is that of ATP-dependent protease subunit HslV from Shewanella woodyi (strain ATCC 51908 / MS32).